Reading from the N-terminus, the 464-residue chain is L-cystine uptake protein TcyP (464 aa).

A run of 10 helical transmembrane segments spans residues Thr-3 to Met-23, Val-34 to Pro-54, Tyr-73 to Phe-93, Gly-107 to Ala-127, Pro-184 to Val-204, Ile-225 to Met-245, Phe-263 to Ala-283, Ala-347 to Leu-367, Phe-371 to Gly-391, and Phe-395 to Ile-415.

Belongs to the dicarboxylate/amino acid:cation symporter (DAACS) (TC 2.A.23) family.

It localises to the membrane. Mediates uptake of L-cystine, the oxidized form of L-cysteine. The sequence is that of L-cystine uptake protein TcyP from Bacillus thuringiensis subsp. konkukian (strain 97-27).